Here is a 77-residue protein sequence, read N- to C-terminus: Immune protein Tsi2 (77 aa).

In terms of assembly, forms a heterotetramer with Tse2 consisting of two Tse2 dimers and two Tsi2 dimers. Formation of the complex inactivates Tse2 enzymatic activity.

Its function is as follows. Immunity protein that plays a role in preventing early activation of toxin Tse2. Binds to a large surface of Tse2 and thereby occludes the active site to specifically inhibits Tse2. The protein is Immune protein Tsi2 of Pseudomonas aeruginosa (strain ATCC 15692 / DSM 22644 / CIP 104116 / JCM 14847 / LMG 12228 / 1C / PRS 101 / PAO1).